The chain runs to 189 residues: Cytidylate kinase (189 aa).

7 to 15 provides a ligand contact to ATP; it reads GPPGSGKTS.

It belongs to the cytidylate kinase family. Type 2 subfamily.

The protein localises to the cytoplasm. It catalyses the reaction CMP + ATP = CDP + ADP. The catalysed reaction is dCMP + ATP = dCDP + ADP. The chain is Cytidylate kinase from Saccharolobus islandicus (strain L.S.2.15 / Lassen #1) (Sulfolobus islandicus).